Reading from the N-terminus, the 179-residue chain is Large ribosomal subunit protein uL5 (179 aa).

Belongs to the universal ribosomal protein uL5 family. As to quaternary structure, part of the 50S ribosomal subunit; part of the 5S rRNA/L5/L18/L25 subcomplex. Contacts the 5S rRNA and the P site tRNA. Forms a bridge to the 30S subunit in the 70S ribosome.

Functionally, this is one of the proteins that bind and probably mediate the attachment of the 5S RNA into the large ribosomal subunit, where it forms part of the central protuberance. In the 70S ribosome it contacts protein S13 of the 30S subunit (bridge B1b), connecting the 2 subunits; this bridge is implicated in subunit movement. Contacts the P site tRNA; the 5S rRNA and some of its associated proteins might help stabilize positioning of ribosome-bound tRNAs. The protein is Large ribosomal subunit protein uL5 of Shewanella woodyi (strain ATCC 51908 / MS32).